We begin with the raw amino-acid sequence, 415 residues long: Tyrosine--tRNA ligase (415 aa).

Positions 54-63 (PTGSNIHLGH) match the 'HIGH' region motif. Residues 248–252 (KMSKT) carry the 'KMSKS' region motif. Lys-251 provides a ligand contact to ATP. Residues 351 to 415 (AKAFYLMSAV…GKKTFRRLTA (65 aa)) form the S4 RNA-binding domain.

Belongs to the class-I aminoacyl-tRNA synthetase family. TyrS type 2 subfamily. In terms of assembly, homodimer.

Its subcellular location is the cytoplasm. The catalysed reaction is tRNA(Tyr) + L-tyrosine + ATP = L-tyrosyl-tRNA(Tyr) + AMP + diphosphate + H(+). In terms of biological role, catalyzes the attachment of tyrosine to tRNA(Tyr) in a two-step reaction: tyrosine is first activated by ATP to form Tyr-AMP and then transferred to the acceptor end of tRNA(Tyr). This chain is Tyrosine--tRNA ligase, found in Synechococcus sp. (strain CC9902).